The following is a 356-amino-acid chain: Tyrosine recombinase XerS (356 aa).

The 106-residue stretch at 16–121 folds into the Core-binding (CB) domain; sequence IMPWYVLDYY…ALSSLYKYLT (106 aa). The 186-residue stretch at 169–354 folds into the Tyr recombinase domain; that stretch reads AFLDYVDKEY…VNDEQKNALD (186 aa). Active-site residues include arginine 210, lysine 234, histidine 306, arginine 309, and histidine 332. Residue tyrosine 341 is the O-(3'-phospho-DNA)-tyrosine intermediate of the active site.

It belongs to the 'phage' integrase family. XerS subfamily.

It localises to the cytoplasm. FtsK is required for recombination. Functionally, site-specific tyrosine recombinase, which acts by catalyzing the cutting and rejoining of the recombining DNA molecules. Essential to convert dimers of the bacterial chromosome into monomers to permit their segregation at cell division. This chain is Tyrosine recombinase XerS, found in Streptococcus equi subsp. zooepidemicus (strain MGCS10565).